The primary structure comprises 864 residues: DNA mismatch repair protein MutS (864 aa).

613–620 contacts ATP; the sequence is GPNMGGKS.

This sequence belongs to the DNA mismatch repair MutS family.

Its function is as follows. This protein is involved in the repair of mismatches in DNA. It is possible that it carries out the mismatch recognition step. This protein has a weak ATPase activity. This Actinobacillus pleuropneumoniae serotype 7 (strain AP76) protein is DNA mismatch repair protein MutS.